The sequence spans 605 residues: Tegument protein UL47 homolog (605 aa).

The tract at residues 1-75 is disordered; it reads MATDNARPRS…DPWKLEPAND (75 aa). Over residues 8–17 the composition is skewed to basic residues; that stretch reads PRSRSLRRKS. Positions 54 to 69 are enriched in basic and acidic residues; the sequence is GADRDPGTRRGIDPWK.

It belongs to the alphaherpesvirinae HHV-1 UL47 family. As to quaternary structure, interacts with US3 kinase. Interacts with UL31 and UL34; these interactions seem important for efficient virion nuclear egress. Interacts with UL41/VHS. Post-translationally, phosphorylated by US3. This phosphorylation is required for proper nuclear localization.

The protein localises to the virion tegument. The protein resides in the host nucleus. Its subcellular location is the host cytoplasm. Its function is as follows. Tegument protein that can bind to various RNA transcripts. Plays a role in the attenuation of selective viral and cellular mRNA degradation by modulating the activity of host shutoff RNase UL41/VHS. Also plays a role in the primary envelopment of virions in the perinuclear space, probably by interacting with two nuclear egress proteins UL31 and UL34. The polypeptide is Tegument protein UL47 homolog (sORF1) (Amazona oratrix (yellow-headed parrot)).